A 366-amino-acid polypeptide reads, in one-letter code: Tripartite motif-containing protein 54 (366 aa).

An RING-type zinc finger spans residues 26 to 82 (CPICLEMFSKPVVILPCQHNLCRKCANDVFQASNPLWQSRSSTTVSSGGRFRCPSCR). A B box-type zinc finger spans residues 121 to 163 (EQHLMCEEHEDEKINIYCLSCEVPTCSLCKVFGAHKDCEVAPL). Residues Cys-126, His-129, Cys-149, and His-155 each coordinate Zn(2+). The mediates microtubule-binding and homooligomerization stretch occupies residues 168–211 (KRQKSELSDGIAMLVAGNDRVQAVITQMEEVCQTIEENSRRQKQ). Positions 185-258 (NDRVQAVITQ…LIRQYGDHLE (74 aa)) form a coiled coil. Residues 271–329 (MEEPQMALYLQQAKELINKVGTMSKVELAGRPEPGYERMDQFTVSVEHVAEMLRTIDFQ) form the COS domain. Positions 326–366 (IDFQPGTSGEEEDEEVAVEGEEGNAGPEEERTDGRESTGQH) are disordered. The segment covering 334–347 (GEEEDEEVAVEGEE) has biased composition (acidic residues). A compositionally biased stretch (basic and acidic residues) spans 353–366 (EEERTDGRESTGQH).

As to quaternary structure, homooligomer and heterooligomer. Interacts with TRIM63 and probably with TRIM55. Interacts with tubulin.

It localises to the cytoplasm. Its subcellular location is the cytoskeleton. It is found in the myofibril. The protein localises to the sarcomere. The protein resides in the z line. May bind and stabilize microtubules during myotubes formation. This Bos taurus (Bovine) protein is Tripartite motif-containing protein 54 (TRIM54).